Here is a 556-residue protein sequence, read N- to C-terminus: MLNLCHALRGVRQFSCSVIVKVKCASCSIKLQDQDPSKPGYYTKPKSLPDSKLNPDLQDLKYLLFSQDIQLSKQAIQNDPDLKTKRDLLLRVICKRCSNALHHNNYNPEEFPESTLNDILNYVPRGSNVMHIVPFVEFPLHLDPNVLKRNDLETTLVLTKSDQVFKDKNAVSKKVPIFMKQFLKNTLRIDSNKTFAISALKNWNISMFYNYFKNYTYLLGNPNVGKSTLINTLLQKYLGYKVKIDSTGKINSPSEEVMQEAFTNPKNFFKIQAAGVSHIPNLTRSVQAYQVGGKILFDLPGYSTSTSRLRLEELIDERWLQRLRKTDLFNRKHIKQKTYESMKGTSQGGCYTVGGIFYLVPPKGSINQIVKYIPGPSKTFKNIEKGIDVFNSCNSSSGTHPLSRYCGIKSVICEKSQYKRYAIPPFIGSIEIVLKDIGYILLRTTGRYEFKGLHEIWIPRGIQVGIREPLENLIESGYQRYIETNGKESSCPRDRPIISSLYEMAPDEADTLNAVKKSYLEKTEKDLSARRFVDDDPYDLVQHLEKKKNPYWYYQW.

The N-terminal 21 residues, 1 to 21, are a transit peptide targeting the mitochondrion; it reads MLNLCHALRGVRQFSCSVIVK. Residues 113 to 305 enclose the CP-type G domain; the sequence is ESTLNDILNY…LFDLPGYSTS (193 aa).

The protein belongs to the TRAFAC class YlqF/YawG GTPase family. GEP3 subfamily.

The protein resides in the mitochondrion. Interacts genetically with prohibitins and thus may be involved in the mitochondrial lipid metabolism. The protein is Genetic interactor of prohibitins 3, mitochondrial (GEP3) of Saccharomyces cerevisiae (strain Lalvin EC1118 / Prise de mousse) (Baker's yeast).